A 286-amino-acid polypeptide reads, in one-letter code: Probable aquaporin PIP-type pTOM75 (286 aa).

Residues 1-35 (MAENKEEDVKLGANKFRETQPLGTAAQTDKDYKEP) are disordered. Over 1 to 55 (MAENKEEDVKLGANKFRETQPLGTAAQTDKDYKEPPPAPLFEPGELSSWSFYRAG) the chain is Cytoplasmic. Over residues 7 to 18 (EDVKLGANKFRE) the composition is skewed to basic and acidic residues. The helical transmembrane segment at 56–76 (IAEFMATFLFLYITILTVMGL) threads the bilayer. The Extracellular segment spans residues 77-89 (KRSDSLCSSVGIQ). The chain crosses the membrane as a helical span at residues 90 to 110 (GVAWAFGGMIFALVYCTAGIS). At 111–133 (GGHINPAVTFGLFLARKLSLTRA) the chain is on the cytoplasmic side. The NPA 1 signature appears at 115 to 117 (NPA). A helical transmembrane segment spans residues 134–154 (VFYMVMQCLGAICGAGVVKGF). At 155–175 (MVGPYQRLGGGANVVNPGYTK) the chain is on the extracellular side. Residues 176–196 (GDGLGAEIIGTFVLVYTVFSA) traverse the membrane as a helical segment. The Cytoplasmic segment spans residues 197-209 (TDAKRNARDSHVP). The chain crosses the membrane as a helical span at residues 210 to 230 (ILAPLPIGFAVFLVHLATIPI). At 231–257 (TGTGINPARSLGAAIIYNDEHAWNDHW) the chain is on the extracellular side. The NPA 2 signature appears at 236 to 238 (NPA). Residues 258–278 (IFWVGPMIGAALAAIYHQIII) traverse the membrane as a helical segment. The Cytoplasmic segment spans residues 279–286 (RAMPFHRS).

The protein belongs to the MIP/aquaporin (TC 1.A.8) family. PIP (TC 1.A.8.11) subfamily. Roots, ripening fruit and senescing leaves.

The protein localises to the cell membrane. In terms of biological role, aquaporins facilitate the transport of water and small neutral solutes across cell membranes. The chain is Probable aquaporin PIP-type pTOM75 from Solanum lycopersicum (Tomato).